We begin with the raw amino-acid sequence, 318 residues long: MSNETRDLYNYQYPSSFSLHEMMNLPTSNPSSYGNLPSQNGFNPSTYSFTDCLQSSPAAYESLLQKTFGLSPSSSEVFNSSIDQEPNRDVTNDVINGGACNETETRVSPSNSSSSEADHPGEDSGKSRRKRELVGEEDQISKKVGKTKKTEVKKQREPRVSFMTKSEVDHLEDGYRWRKYGQKAVKNSPYPRSYYRCTTQKCNVKKRVERSFQDPTVVITTYEGQHNHPIPTNLRGSSAAAAMFSADLMTPRSFAHDMFRTAAYTNGGSVAAALDYGYGQSGYGSVNSNPSSHQVYHQGGEYELLREIFPSIFFKQEP.

Composition is skewed to polar residues over residues Ser-74 to Gln-84 and Arg-106 to Ser-115. The tract at residues Ser-74 to Pro-158 is disordered. Basic and acidic residues-rich tracts occupy residues Glu-116 to Lys-126 and Lys-148 to Pro-158. The WRKY DNA-binding region spans Ser-166–Pro-231.

Belongs to the WRKY group II-c family.

It is found in the nucleus. Transcription factor. Interacts specifically with the W box (5'-(T)TGAC[CT]-3'), a frequently occurring elicitor-responsive cis-acting element. In Arabidopsis thaliana (Mouse-ear cress), this protein is WRKY transcription factor 28 (WRKY28).